The sequence spans 339 residues: Inositol 2-dehydrogenase (339 aa).

It belongs to the Gfo/Idh/MocA family. In terms of assembly, homotetramer.

The enzyme catalyses myo-inositol + NAD(+) = scyllo-inosose + NADH + H(+). Functionally, involved in the oxidation of myo-inositol (MI) to 2-keto-myo-inositol (2KMI or 2-inosose). The chain is Inositol 2-dehydrogenase from Leifsonia xyli subsp. xyli (strain CTCB07).